Consider the following 229-residue polypeptide: MHLVSVIQRGVWAVLLWPNLLASSVPLDCREEQGILSRCPSISQEKLLDRVIEHAELIYRVSEESCSLYEDMFIPLQFQRNQVGYACITKTLPVPSSKNEIQQISDKWLLHSVLMLVQSWIEPLVYLQTSLDRYNAAPEMLLNKTKWVSEKLISLEQGVVVLIKKMLDEGMLTINHSEQGLLQNGVQPQMLESVMRDYTLLSCFKKDAHKMEAFLKLLKCRQTDRYNCS.

Residues 1 to 24 (MHLVSVIQRGVWAVLLWPNLLASS) form the signal peptide. Intrachain disulfides connect C29/C39, C87/C203, and C220/C228. N-linked (GlcNAc...) asparagine glycosylation is found at N143 and N175.

It belongs to the somatotropin/prolactin family.

Its subcellular location is the secreted. The protein is Somatolactin of Cyclopterus lumpus (Lumpsucker).